An 87-amino-acid chain; its full sequence is Large ribosomal subunit protein bL31B (87 aa).

Belongs to the bacterial ribosomal protein bL31 family. Type B subfamily. As to quaternary structure, part of the 50S ribosomal subunit.

The protein is Large ribosomal subunit protein bL31B of Ralstonia nicotianae (strain ATCC BAA-1114 / GMI1000) (Ralstonia solanacearum).